An 88-amino-acid chain; its full sequence is Small ribosomal subunit protein bS20 (88 aa).

A disordered region spans residues Met1–Arg25. A compositionally biased stretch (basic residues) spans Ala7–His20.

This sequence belongs to the bacterial ribosomal protein bS20 family.

In terms of biological role, binds directly to 16S ribosomal RNA. This Psychrobacter sp. (strain PRwf-1) protein is Small ribosomal subunit protein bS20.